We begin with the raw amino-acid sequence, 210 residues long: NADH dehydrogenase [ubiquinone] iron-sulfur protein 8, mitochondrial (210 aa).

The N-terminal 34 residues, 1–34, are a transit peptide targeting the mitochondrion; the sequence is MRCLTTPMLLRALAQAARAGPPCGRSLHSSAVAA. 4Fe-4S ferredoxin-type domains are found at residues 102 to 131 and 141 to 170; these read RRYP…IEAE and TRYD…EGPN. [4Fe-4S] cluster contacts are provided by Cys111, Cys114, Cys117, Cys121, Cys150, Cys153, Cys156, and Cys160.

Belongs to the complex I 23 kDa subunit family. As to quaternary structure, core subunit of respiratory chain NADH dehydrogenase (Complex I) which is composed of 45 different subunits. This is a component of the iron-sulfur (IP) fragment of the enzyme. Interacts with RAB5IF. It depends on [4Fe-4S] cluster as a cofactor.

The protein resides in the mitochondrion inner membrane. The catalysed reaction is a ubiquinone + NADH + 5 H(+)(in) = a ubiquinol + NAD(+) + 4 H(+)(out). Functionally, core subunit of the mitochondrial membrane respiratory chain NADH dehydrogenase (Complex I) which catalyzes electron transfer from NADH through the respiratory chain, using ubiquinone as an electron acceptor. Essential for the catalytic activity and assembly of complex I. The protein is NADH dehydrogenase [ubiquinone] iron-sulfur protein 8, mitochondrial (NDUFS8) of Pongo abelii (Sumatran orangutan).